The primary structure comprises 273 residues: WIMGHMVNAIYQTDEFVNLGANSIETDVSFDDNANPEYTYHGIPCDCGRSCLKWENYNDFLKGLRSATTPGNSKYQSKLILVVFDLKTGSLYDNQASEAGKKLAKNLLKHYWNNGNNGGRAYIVLSIPDLNHYPLIKGFTDTLKQEGHPELLEKVGYDFSGNDAVGDVAKAYKKAGVSGHVWQSDGITNCLLRGLTRVKEAVANRDSGNGYINKVYYWTVDKRATTRDALDAGVDGVMTNYPDVIADVMNEAAYKNKVRLATYEDSPWVTFKK.

The active site involves His5. Mg(2+) is bound by residues Glu25 and Asp27. His41 functions as the Nucleophile in the catalytic mechanism. 2 disulfide bridges follow: Cys45/Cys51 and Cys47/Cys190. Asp85 lines the Mg(2+) pocket.

Belongs to the arthropod phospholipase D family. Class II subfamily. Requires Mg(2+) as cofactor. Expressed by the venom gland.

Its subcellular location is the secreted. The enzyme catalyses an N-(acyl)-sphingosylphosphocholine = an N-(acyl)-sphingosyl-1,3-cyclic phosphate + choline. It carries out the reaction an N-(acyl)-sphingosylphosphoethanolamine = an N-(acyl)-sphingosyl-1,3-cyclic phosphate + ethanolamine. The catalysed reaction is a 1-acyl-sn-glycero-3-phosphocholine = a 1-acyl-sn-glycero-2,3-cyclic phosphate + choline. It catalyses the reaction a 1-acyl-sn-glycero-3-phosphoethanolamine = a 1-acyl-sn-glycero-2,3-cyclic phosphate + ethanolamine. In terms of biological role, dermonecrotic toxins cleave the phosphodiester linkage between the phosphate and headgroup of certain phospholipids (sphingolipid and lysolipid substrates), forming an alcohol (often choline) and a cyclic phosphate. This toxin acts on sphingomyelin (SM). It may also act on ceramide phosphoethanolamine (CPE), lysophosphatidylcholine (LPC) and lysophosphatidylethanolamine (LPE), but not on lysophosphatidylserine (LPS), and lysophosphatidylglycerol (LPG). It acts by transphosphatidylation, releasing exclusively cyclic phosphate products as second products. Induces dermonecrosis, hemolysis, increased vascular permeability, edema, inflammatory response, and platelet aggregation. This Loxosceles hirsuta (Recluse spider) protein is Dermonecrotic toxin LhSicTox-alphaIA2avii.